A 1219-amino-acid polypeptide reads, in one-letter code: Cullin-associated NEDD8-dissociated protein 1 (1219 aa).

Position 2 is an N-acetylalanine (A2). HEAT repeat units lie at residues 44–81 (DLEV…KVGE), 83–119 (RIVE…QIAP), 209–244 (KATV…AVGY), 248–288 (THLG…RCPR), 327–363 (EEDD…SRSE), 367–404 (KVYQ…QTGN), 423–460 (QEVS…VLPD), 464–503 (DHIG…SHAP), 599–636 (AELP…LHIN), 639–676 (CVLD…AYGD), 808–848 (KNCS…RKDL), 850–883 (AHAG…IAVG), 927–964 (SSVE…IEPE), 966–998 (LVPA…ERPE), 1002–1039 (EIIF…YKPN), 1043–1079 (GLLP…DDGL), 1101–1137 (NPSS…KCPS), and 1141–1180 (AVLD…ALRA). The interval 311–340 (FTDNMEEDTDNETLEDEEDDESANEYTDDE) is disordered. Acidic residues predominate over residues 314–340 (NMEEDTDNETLEDEEDDESANEYTDDE).

It belongs to the CAND family. In terms of assembly, interacts with CUL1 and CUL4. Binds unneddylated CUL1, but cannot bind CUL1 once it has been neddylated. In terms of tissue distribution, highly expressed in roots. Expressed in stems, flowers and siliques.

Its function is as follows. Key assembly factor of SCF (SKP1-CUL1-F-box protein) E3 ubiquitin ligase complexes that promotes the exchange of the substrate-recognition F-box subunit in SCF complexes, thereby playing a key role in the cellular repertoire of SCF complexes. Acts as a F-box protein exchange factor. Required for SCF(TIR1) function. Modulates SCF(TIR1) function through its interactions with the CUL1 subunit. Represses photomorphogenesis by promoting HY5 degradation in darkness. This is Cullin-associated NEDD8-dissociated protein 1 (CAND1) from Arabidopsis thaliana (Mouse-ear cress).